An 877-amino-acid polypeptide reads, in one-letter code: Alanine--tRNA ligase (877 aa).

Zn(2+)-binding residues include histidine 565, histidine 569, cysteine 667, and histidine 671.

The protein belongs to the class-II aminoacyl-tRNA synthetase family. Zn(2+) serves as cofactor.

The protein resides in the cytoplasm. The catalysed reaction is tRNA(Ala) + L-alanine + ATP = L-alanyl-tRNA(Ala) + AMP + diphosphate. Functionally, catalyzes the attachment of alanine to tRNA(Ala) in a two-step reaction: alanine is first activated by ATP to form Ala-AMP and then transferred to the acceptor end of tRNA(Ala). Also edits incorrectly charged Ser-tRNA(Ala) and Gly-tRNA(Ala) via its editing domain. This is Alanine--tRNA ligase from Acidithiobacillus ferridurans.